A 422-amino-acid polypeptide reads, in one-letter code: Nucleoside transporter 1 (422 aa).

At 1–38 (MSTGKESSKAYADIESRGDYKDDGKKGSTLSSKQHFML) the chain is on the cytoplasmic side. Residues 39–59 (SLTFILIGLSSLNVWNTALGL) form a helical membrane-spanning segment. Trp-53 lines the inosine pocket. Residues 60 to 63 (NINF) are Extracellular-facing. Residues 64–82 (KYNTFQITGLVCSSIVALF) traverse the membrane as a helical segment. The Cytoplasmic portion of the chain corresponds to 83–87 (VEIPK). The helical transmembrane segment at 88-107 (IMLPFLLGGLSILCAGFQIS) threads the bilayer. Over 108–116 (HSFFTDTQF) the chain is Extracellular. A helical membrane pass occupies residues 117 to 139 (DTYCLVAFIVIGVVAGLAQTIAF). Gln-135 serves as a coordination point for inosine. The Cytoplasmic portion of the chain corresponds to 140 to 149 (NIGSTMEDNM). A helical transmembrane segment spans residues 150–174 (GGYMSAGIGISGVFIFVINLLLDQF). The Extracellular portion of the chain corresponds to 175–185 (VSPEKHYGVNK). A helical membrane pass occupies residues 186–208 (AKLLYLYIICELCLILAIVFCVC). Residues 209–241 (NLDLTNKNNKKDEENKENNATLSYMELFKDSYK) are Cytoplasmic-facing. Residues 242–265 (AILTMFLVNWLTLQLFPGVGHKKW) form a helical membrane-spanning segment. Residues 266–274 (QESHNISDY) are Extracellular-facing. Residues 275–294 (NVTIIVGMFQVFDFLSRYPP) form a helical membrane-spanning segment. Inosine-binding residues include Asp-287 and Arg-291. Residues 295-309 (NLTHIKIFKNFTFSL) lie on the Cytoplasmic side of the membrane. The helical transmembrane segment at 310-330 (NKLLVANSLRLLFIPWFILNA) threads the bilayer. Residues 331-338 (CVDHPFFK) lie on the Extracellular side of the membrane. Residues 339 to 362 (NIVQQCVCMAMLAFTNGWFNTVPF) traverse the membrane as a helical segment. Residues 363–374 (LVFVKELKKAKK) lie on the Cytoplasmic side of the membrane. The chain crosses the membrane as a helical span at residues 375 to 397 (KKEIEIISTFLVIAMFVGLFCGI). Topologically, residues 398 to 422 (WTTYIYNLFNIVLPKPDLPPIDVTQ) are extracellular.

Belongs to the SLC29A/ENT transporter (TC 2.A.57) family.

Its subcellular location is the cell membrane. It carries out the reaction inosine(in) = inosine(out). The catalysed reaction is adenosine(in) = adenosine(out). The enzyme catalyses hypoxanthine(out) = hypoxanthine(in). It catalyses the reaction guanosine(in) = guanosine(out). It carries out the reaction guanine(out) = guanine(in). The catalysed reaction is thymidine(in) = thymidine(out). The enzyme catalyses uridine(out) = uridine(in). It catalyses the reaction uracil(in) = uracil(out). It carries out the reaction thymine(out) = thymine(in). The catalysed reaction is adenine(out) = adenine(in). The enzyme catalyses cytosine(out) = cytosine(in). It catalyses the reaction xanthine(out) = xanthine(in). GSK4 (5-methyl-N-[2-(2-oxo-1-azepanyl)ethyl]-2-phenyl-1,3-oxazole-4-carbox-amide) disrupts the transport activity at 500 nM. Inhibited partially by 10 uM dipyridamole. Inhibited partially by N,N'-1,3-benzothiazole-2,6-diyldi(2-furamide), 2-bromo-N-(4-[1,3]oxazolo[4,5-b]pyridin-2-ylphenyl)benzamide, 4-methyl-7-[(3,4,5-trimethoxybenzyl)oxy]-2H-chromen-2-one, 2-(1-methyl-1H-indol-3-yl)-2-oxo-N-[4-(pyrrolidin-1-ylcarbonyl)phenyl]acet amide and 2-[2-(2-methylphenyl)vinyl]-4(3H)-quinazolinone. Sodium-independent nucleoside and nucleobase transporter with a broad substrate specificity. Plays a key role in the utilization of host purine sources by P.falciparum during intraerythrocytic development enabling parasite growth in the presence of physiological concentrations of adenosine, inosine, guanine, guanosine, xanthine and hypoxanthine. Essential for parasite transition from ring to trophozoite or from trophozoite to schizont stage but not for erythrocyte invasion by merozoites. This Plasmodium falciparum (isolate 3D7) protein is Nucleoside transporter 1.